The following is a 679-amino-acid chain: Altered inheritance of mitochondria protein 21 (679 aa).

Residues 1–95 (MPSEVTPKVP…EELNNVMNNT (95 aa)) form a disordered region. Over residues 9–19 (VPERPSRRKTS) the composition is skewed to basic and acidic residues. The residue at position 18 (threonine 18) is a Phosphothreonine. The residue at position 36 (serine 36) is a Phosphoserine. At threonine 58 the chain carries Phosphothreonine. Phosphoserine is present on serine 70. Residue threonine 85 is modified to Phosphothreonine. Residues 86 to 95 (EELNNVMNNT) are compositionally biased toward polar residues. Serine 104 carries the post-translational modification Phosphoserine. Disordered stretches follow at residues 107–522 (SKHN…EKIE) and 548–679 (LMDT…FHSL). Residues 109 to 119 (HNIHSVSRKKS) are compositionally biased toward basic residues. Composition is skewed to polar residues over residues 133 to 149 (QNGQRSASDNKTSTNPS) and 164 to 178 (SAISPSNSVNKSNNE). Positions 179 to 213 (VTEHSDSEDLTEKQKVHAALDNEAGDGSHFEEKLI) are enriched in basic and acidic residues. Phosphoserine is present on residues serine 183, serine 206, and serine 231. The span at 243–272 (SDDKAEKFTKHPESSLEELQKHQEQQEEKI) shows a compositional bias: basic and acidic residues. Threonine 277 carries the phosphothreonine modification. At serine 284 the chain carries Phosphoserine. The span at 296–323 (EVNSQPQGPSDTETVIAATSSNVPSQIA) shows a compositional bias: polar residues. Serine 324 is subject to Phosphoserine. Basic and acidic residues-rich tracts occupy residues 339–351 (KKDFEAHVQKEEL) and 372–383 (EESKIPKIPSER). The interval 383–396 (RPKRRAPPPVPKKP) is interaction with SH3 domain of ABP1. 2 stretches are compositionally biased toward polar residues: residues 414–427 (DLHNNGNSSATTAS) and 437–452 (SSITSDTTKADFTSKL). Positions 471-482 (LEKKLSSPDTES) are enriched in basic and acidic residues. Polar residues predominate over residues 483–492 (KLGTQDQSQA). Residues 501–512 (RRGRGPRGRKLP) are compositionally biased toward basic residues. Threonine 552 bears the Phosphothreonine mark. The segment covering 556-576 (QAERALDEKSKSIPEEQREQS) has biased composition (basic and acidic residues). At serine 576 the chain carries Phosphoserine. The span at 603-613 (PLSQLPQTNAV) shows a compositional bias: polar residues. Phosphoserine occurs at positions 620, 623, 625, 627, 667, 671, 675, and 678. Positions 667-679 (SALHSEEASFHSL) are enriched in basic and acidic residues.

Belongs to the AIM21 family. Interacts with ribosomes. Interacts with ABP1.

The protein localises to the cytoplasm. It is found in the cytoskeleton. Its subcellular location is the actin patch. Functionally, involved in mitochondrial migration along actin filaments. In Saccharomyces cerevisiae (strain YJM789) (Baker's yeast), this protein is Altered inheritance of mitochondria protein 21 (AIM21).